The chain runs to 266 residues: 4-hydroxy-tetrahydrodipicolinate reductase (266 aa).

NAD(+) contacts are provided by residues glycine 8–methionine 13 and glutamate 33. An NADP(+)-binding site is contributed by arginine 34. Residues glycine 97–threonine 99 and alanine 121–methionine 124 each bind NAD(+). Residue histidine 154 is the Proton donor/acceptor of the active site. Residue histidine 155 participates in (S)-2,3,4,5-tetrahydrodipicolinate binding. Lysine 158 (proton donor) is an active-site residue. Glycine 164–threonine 165 serves as a coordination point for (S)-2,3,4,5-tetrahydrodipicolinate.

This sequence belongs to the DapB family.

It is found in the cytoplasm. It catalyses the reaction (S)-2,3,4,5-tetrahydrodipicolinate + NAD(+) + H2O = (2S,4S)-4-hydroxy-2,3,4,5-tetrahydrodipicolinate + NADH + H(+). The catalysed reaction is (S)-2,3,4,5-tetrahydrodipicolinate + NADP(+) + H2O = (2S,4S)-4-hydroxy-2,3,4,5-tetrahydrodipicolinate + NADPH + H(+). It functions in the pathway amino-acid biosynthesis; L-lysine biosynthesis via DAP pathway; (S)-tetrahydrodipicolinate from L-aspartate: step 4/4. Catalyzes the conversion of 4-hydroxy-tetrahydrodipicolinate (HTPA) to tetrahydrodipicolinate. The protein is 4-hydroxy-tetrahydrodipicolinate reductase of Trichlorobacter lovleyi (strain ATCC BAA-1151 / DSM 17278 / SZ) (Geobacter lovleyi).